The chain runs to 180 residues: Large ribosomal subunit protein uL5 (180 aa).

It belongs to the universal ribosomal protein uL5 family. In terms of assembly, part of the 50S ribosomal subunit; part of the 5S rRNA/L5/L18/L25 subcomplex. Contacts the 5S rRNA and the P site tRNA. Forms a bridge to the 30S subunit in the 70S ribosome.

In terms of biological role, this is one of the proteins that bind and probably mediate the attachment of the 5S RNA into the large ribosomal subunit, where it forms part of the central protuberance. In the 70S ribosome it contacts protein S13 of the 30S subunit (bridge B1b), connecting the 2 subunits; this bridge is implicated in subunit movement. Contacts the P site tRNA; the 5S rRNA and some of its associated proteins might help stabilize positioning of ribosome-bound tRNAs. This is Large ribosomal subunit protein uL5 from Polynucleobacter asymbioticus (strain DSM 18221 / CIP 109841 / QLW-P1DMWA-1) (Polynucleobacter necessarius subsp. asymbioticus).